The following is a 269-amino-acid chain: Ribosomal RNA large subunit methyltransferase E (269 aa).

5 residues coordinate S-adenosyl-L-methionine: G48, W50, D68, D86, and D111. K151 functions as the Proton acceptor in the catalytic mechanism. In terms of domain architecture, TRAM spans 198 to 256 (PVAAGDRIEVTVEERGDEGDGIAYVEGYSIFVSDADVGETVTVEVVDAKPRFGFATRVD).

This sequence belongs to the class I-like SAM-binding methyltransferase superfamily. RNA methyltransferase RlmE family.

Its subcellular location is the cytoplasm. The catalysed reaction is uridine(2552) in 23S rRNA + S-adenosyl-L-methionine = 2'-O-methyluridine(2552) in 23S rRNA + S-adenosyl-L-homocysteine + H(+). Functionally, specifically methylates the uridine in position 2552 of 23S rRNA at the 2'-O position of the ribose in the fully assembled 50S ribosomal subunit. The protein is Ribosomal RNA large subunit methyltransferase E of Halorubrum lacusprofundi (strain ATCC 49239 / DSM 5036 / JCM 8891 / ACAM 34).